The primary structure comprises 79 residues: Beta-defensin 15 (79 aa).

The N-terminal stretch at 1–20 is a signal peptide; that stretch reads MKTFLFLFAVFFFLDPAKNA. 3 disulfide bridges follow: cysteine 26–cysteine 53, cysteine 33–cysteine 47, and cysteine 37–cysteine 54.

It belongs to the beta-defensin family.

The protein resides in the secreted. Its function is as follows. Has antibacterial activity. The chain is Beta-defensin 15 (Defb15) from Rattus norvegicus (Rat).